The sequence spans 138 residues: UPF0047 protein YjbQ (138 aa).

The protein belongs to the UPF0047 family.

In Escherichia coli O157:H7, this protein is UPF0047 protein YjbQ (yjbQ).